The chain runs to 334 residues: Protein-methionine-sulfoxide reductase catalytic subunit MsrP (334 aa).

A signal peptide (tat-type signal) is located at residues 1-44 (MKKKQFLKESDVTAESVFFMKRRQVLKALGISAAALSLPHAAHA). Residues asparagine 88, 91–92 (YE), cysteine 146, threonine 181, asparagine 233, arginine 238, and 249–251 (GIK) contribute to the Mo-molybdopterin site.

Belongs to the MsrP family. As to quaternary structure, heterodimer of a catalytic subunit (MsrP) and a heme-binding subunit (MsrQ). Mo-molybdopterin serves as cofactor. Predicted to be exported by the Tat system. The position of the signal peptide cleavage has not been experimentally proven.

The protein resides in the periplasm. It catalyses the reaction L-methionyl-[protein] + a quinone + H2O = L-methionyl-(S)-S-oxide-[protein] + a quinol. The catalysed reaction is L-methionyl-[protein] + a quinone + H2O = L-methionyl-(R)-S-oxide-[protein] + a quinol. Functionally, part of the MsrPQ system that repairs oxidized periplasmic proteins containing methionine sulfoxide residues (Met-O), using respiratory chain electrons. Thus protects these proteins from oxidative-stress damage caused by reactive species of oxygen and chlorine generated by the host defense mechanisms. MsrPQ is essential for the maintenance of envelope integrity under bleach stress, rescuing a wide series of structurally unrelated periplasmic proteins from methionine oxidation, including the primary periplasmic chaperone SurA and the lipoprotein Pal. The catalytic subunit MsrP is non-stereospecific, being able to reduce both (R-) and (S-) diastereoisomers of methionine sulfoxide. In Escherichia coli O139:H28 (strain E24377A / ETEC), this protein is Protein-methionine-sulfoxide reductase catalytic subunit MsrP.